Here is an 88-residue protein sequence, read N- to C-terminus: RKGRRDKIGKVKTAALKGSPQRRGVCTRVYTTTPKKPNSALRKVARVKLTSQVEVTAYIPGEAHNLQEHSMVLVRGGRVKDLPGVRYK.

The tract at residues 1–24 (RKGRRDKIGKVKTAALKGSPQRRG) is disordered. The residue at position 81 (D81) is a 3-methylthioaspartic acid.

The protein belongs to the universal ribosomal protein uS12 family. Part of the 30S ribosomal subunit. Contacts proteins S8 and S17. May interact with IF1 in the 30S initiation complex.

With S4 and S5 plays an important role in translational accuracy. Functionally, interacts with and stabilizes bases of the 16S rRNA that are involved in tRNA selection in the A site and with the mRNA backbone. Located at the interface of the 30S and 50S subunits, it traverses the body of the 30S subunit contacting proteins on the other side and probably holding the rRNA structure together. The combined cluster of proteins S8, S12 and S17 appears to hold together the shoulder and platform of the 30S subunit. This chain is Small ribosomal subunit protein uS12 (rpsL), found in Mycobacterium szulgai.